Reading from the N-terminus, the 120-residue chain is MARIAGVDLPKKKRVEYALTYIYGIGLKSSQDILKAVNISFDKRVSDLSEDEVSSIAKKIQESYMVEGDLRKKVTMDIKSLMDLGSYRGLRHRKGLPVRGQTTKNNARTRKGKKKTVGSK.

The tract at residues 92 to 120 (HRKGLPVRGQTTKNNARTRKGKKKTVGSK) is disordered. The segment covering 107–120 (ARTRKGKKKTVGSK) has biased composition (basic residues).

Belongs to the universal ribosomal protein uS13 family. Part of the 30S ribosomal subunit. Forms a loose heterodimer with protein S19. Forms two bridges to the 50S subunit in the 70S ribosome.

Located at the top of the head of the 30S subunit, it contacts several helices of the 16S rRNA. In the 70S ribosome it contacts the 23S rRNA (bridge B1a) and protein L5 of the 50S subunit (bridge B1b), connecting the 2 subunits; these bridges are implicated in subunit movement. Contacts the tRNAs in the A and P-sites. This chain is Small ribosomal subunit protein uS13, found in Helicobacter hepaticus (strain ATCC 51449 / 3B1).